Consider the following 86-residue polypeptide: RNA-binding protein Hfq (86 aa).

The Sm domain maps to 9-68; that stretch reads DPYLNTLRKEKVPVSIYLVNGIKLQGSIESFDQFVVLLKNTVSQMVYKHAISTVVPARPV. The segment at 66–86 is disordered; the sequence is RPVRLPSPTDSEHGDSEPGNA. The segment covering 75 to 86 has biased composition (basic and acidic residues); the sequence is DSEHGDSEPGNA.

Belongs to the Hfq family. As to quaternary structure, homohexamer.

In terms of biological role, RNA chaperone that binds small regulatory RNA (sRNAs) and mRNAs to facilitate mRNA translational regulation in response to envelope stress, environmental stress and changes in metabolite concentrations. Also binds with high specificity to tRNAs. The sequence is that of RNA-binding protein Hfq from Pseudomonas putida (strain ATCC 700007 / DSM 6899 / JCM 31910 / BCRC 17059 / LMG 24140 / F1).